The following is a 757-amino-acid chain: Large ribosomal subunit protein mL102 (rPPR5) (757 aa).

The span at 39–55 shows a compositional bias: polar residues; it reads EETQTPANANPETQSPD. A disordered region spans residues 39 to 82; that stretch reads EETQTPANANPETQSPDAKSETKKNLTSTETRPLRERFQRGKRQ. Basic and acidic residues predominate over residues 70-82; that stretch reads RPLRERFQRGKRQ. PPR repeat units follow at residues 149 to 183, 184 to 218, 219 to 253, 254 to 288, 289 to 323, 324 to 358, 359 to 393, 395 to 429, 430 to 464, 473 to 507, 510 to 541, 542 to 576, 577 to 611, 614 to 648, 651 to 680, and 681 to 715; these read DRDT…GVPW, DEDM…GVER, TIKS…GVEP, TRHT…GISP, DDAT…KIGP, SVVS…GIEP, NATT…HIAP, DNSI…NVPA, EAGH…EIIL, EPSA…GVQD, ALNN…GVPR, ESNA…GHVP, DSSL…NVGI, NMDL…GHTA, DSLL…DLSL, and EFSS…GSST.

This sequence belongs to the PPR family. P subfamily. As to quaternary structure, component of the mitochondrial ribosome large subunit.

The protein resides in the mitochondrion. The protein is Large ribosomal subunit protein mL102 (rPPR5) of Arabidopsis thaliana (Mouse-ear cress).